An 82-amino-acid polypeptide reads, in one-letter code: MPKRTLQGVVVSDKQAKTVVVRVDRRFTHPIYKKTIRRSKNYHAHDENDQFHPGDMVWIEESKPISKLKRWTVVRGEPKKTA.

Belongs to the universal ribosomal protein uS17 family. Part of the 30S ribosomal subunit.

One of the primary rRNA binding proteins, it binds specifically to the 5'-end of 16S ribosomal RNA. The sequence is that of Small ribosomal subunit protein uS17 from Rhodopseudomonas palustris (strain HaA2).